We begin with the raw amino-acid sequence, 257 residues long: Homeobox protein goosecoid (257 aa).

The homeobox DNA-binding region spans 160-219 (KRRHRTIFTDEQLEALENLFQETKYPDVGTREQLARKVHLREEKVEVWFKNRRAKWRRQK). Residues 213–257 (AKWRRQKRSSSEESENAEKWNKTSSSKASPEKREEEGKSDLDSDS) form a disordered region. The segment covering 241–257 (SPEKREEEGKSDLDSDS) has biased composition (basic and acidic residues).

It belongs to the paired homeobox family. Bicoid subfamily.

It is found in the nucleus. In terms of biological role, regulates chordin (CHRD). May play a role in spatial programing within discrete embryonic fields or lineage compartments during organogenesis. In concert with NKX3-2, plays a role in defining the structural components of the middle ear; required for the development of the entire tympanic ring. Probably involved in the regulatory networks that define neural crest cell fate specification and determine mesoderm cell lineages in mammals. The chain is Homeobox protein goosecoid (GSC) from Pongo pygmaeus (Bornean orangutan).